The sequence spans 354 residues: Methylthioribose-1-phosphate isomerase (354 aa).

Substrate contacts are provided by residues 58–60 (RGA), Arg101, and Gln204. Catalysis depends on Asp245, which acts as the Proton donor. 255 to 256 (NK) contacts substrate.

Belongs to the eIF-2B alpha/beta/delta subunits family. MtnA subfamily.

The catalysed reaction is 5-(methylsulfanyl)-alpha-D-ribose 1-phosphate = 5-(methylsulfanyl)-D-ribulose 1-phosphate. The protein operates within amino-acid biosynthesis; L-methionine biosynthesis via salvage pathway; L-methionine from S-methyl-5-thio-alpha-D-ribose 1-phosphate: step 1/6. Its function is as follows. Catalyzes the interconversion of methylthioribose-1-phosphate (MTR-1-P) into methylthioribulose-1-phosphate (MTRu-1-P). This chain is Methylthioribose-1-phosphate isomerase, found in Xanthomonas oryzae pv. oryzae (strain MAFF 311018).